A 222-amino-acid polypeptide reads, in one-letter code: ATP-dependent dethiobiotin synthetase BioD (222 aa).

12–17 (DAGKTV) is a binding site for ATP. T16 lines the Mg(2+) pocket. The active site involves K37. Position 41 (S41) interacts with substrate. Residues D54, 116-119 (EGAG), 176-177 (VQ), 206-208 (PYL), and E213 each bind ATP. Positions 54 and 116 each coordinate Mg(2+).

This sequence belongs to the dethiobiotin synthetase family. As to quaternary structure, homodimer. Mg(2+) serves as cofactor.

It is found in the cytoplasm. The catalysed reaction is (7R,8S)-7,8-diammoniononanoate + CO2 + ATP = (4R,5S)-dethiobiotin + ADP + phosphate + 3 H(+). The protein operates within cofactor biosynthesis; biotin biosynthesis; biotin from 7,8-diaminononanoate: step 1/2. Its function is as follows. Catalyzes a mechanistically unusual reaction, the ATP-dependent insertion of CO2 between the N7 and N8 nitrogen atoms of 7,8-diaminopelargonic acid (DAPA, also called 7,8-diammoniononanoate) to form a ureido ring. The protein is ATP-dependent dethiobiotin synthetase BioD of Idiomarina loihiensis (strain ATCC BAA-735 / DSM 15497 / L2-TR).